The chain runs to 33 residues: Photosystem II reaction center protein Psb30 (33 aa).

A helical membrane pass occupies residues 5–25; that stretch reads VLAQLTVLTLIVISGPLVIAL.

Belongs to the Psb30/Ycf12 family. In terms of assembly, PSII is composed of 1 copy each of membrane proteins PsbA, PsbB, PsbC, PsbD, PsbE, PsbF, PsbH, PsbI, PsbJ, PsbK, PsbL, PsbM, PsbT, PsbX, PsbY, PsbZ, Psb30/Ycf12, peripheral proteins of the oxygen-evolving complex and a large number of cofactors. It forms dimeric complexes.

It is found in the plastid. The protein resides in the chloroplast thylakoid membrane. A core subunit of photosystem II (PSII), probably helps stabilize the reaction center. The sequence is that of Photosystem II reaction center protein Psb30 from Cycas taitungensis (Prince sago).